Reading from the N-terminus, the 439-residue chain is CBL-interacting serine/threonine-protein kinase 26 (439 aa).

The 256-residue stretch at 13 to 268 (YEVGKTLGQG…IPEVLGDAWF (256 aa)) folds into the Protein kinase domain. ATP is bound by residues 19 to 27 (LGQGTFAKV) and Lys-42. The Proton acceptor role is filled by Asp-136. The segment at 154–183 (DFGLSALSRQVRGDGLLHTACGTPNYAAPE) is activation loop. Ser-158 bears the Phosphoserine mark. Phosphothreonine is present on Thr-172. The region spanning 306-330 (EQPTSMNAFELISMSRALDLGNLFE) is the NAF domain. The PPI stretch occupies residues 336–365 (KRETRFAAKGAANDLVQKIEEASKPLGFDI).

It belongs to the protein kinase superfamily. CAMK Ser/Thr protein kinase family. SNF1 subfamily. In terms of assembly, interacts with RBOHF (via N-terminus). Requires Mn(2+) as cofactor.

It localises to the cell membrane. It carries out the reaction L-seryl-[protein] + ATP = O-phospho-L-seryl-[protein] + ADP + H(+). The catalysed reaction is L-threonyl-[protein] + ATP = O-phospho-L-threonyl-[protein] + ADP + H(+). Functionally, CIPK serine-threonine protein kinases interact with CBL proteins. Binding of a CBL protein to the regulatory NAF domain of CIPK protein lead to the activation of the kinase in a calcium-dependent manner. Involved in the calcium-dependent regulation of reactive oxygen species production by the NADPH oxidase RBOHF. The polypeptide is CBL-interacting serine/threonine-protein kinase 26 (CIPK26) (Arabidopsis thaliana (Mouse-ear cress)).